The following is a 337-amino-acid chain: 3-isopropylmalate dehydrogenase (337 aa).

Substrate is bound by residues Arg-88, Arg-98, Arg-122, and Asp-212. 3 residues coordinate Mg(2+): Asp-212, Asp-236, and Asp-240. An NAD(+)-binding site is contributed by 272-284 (GSAPDIAGKGIAD).

This sequence belongs to the isocitrate and isopropylmalate dehydrogenases family. LeuB type 2 subfamily. Homodimer. Mg(2+) serves as cofactor. The cofactor is Mn(2+).

The protein localises to the cytoplasm. It carries out the reaction (2R,3S)-3-isopropylmalate + NAD(+) = 4-methyl-2-oxopentanoate + CO2 + NADH. It participates in amino-acid biosynthesis; L-leucine biosynthesis; L-leucine from 3-methyl-2-oxobutanoate: step 3/4. Catalyzes the oxidation of 3-carboxy-2-hydroxy-4-methylpentanoate (3-isopropylmalate) to 3-carboxy-4-methyl-2-oxopentanoate. The product decarboxylates to 4-methyl-2 oxopentanoate. This is 3-isopropylmalate dehydrogenase from Rhodococcus erythropolis (strain PR4 / NBRC 100887).